A 73-amino-acid polypeptide reads, in one-letter code: MLVLSRKIGQSIIIGNDIEIKILKIDGGEIKIGIEAPKDVKVLRKELYEELLKENKEAVKFDIKNLPGFFKKK.

The protein belongs to the CsrA/RsmA family. In terms of assembly, homodimer; the beta-strands of each monomer intercalate to form a hydrophobic core, while the alpha-helices form wings that extend away from the core.

Its subcellular location is the cytoplasm. A translational regulator that binds mRNA to regulate translation initiation and/or mRNA stability. Usually binds in the 5'-UTR at or near the Shine-Dalgarno sequence preventing ribosome-binding, thus repressing translation. Its main target seems to be the major flagellin gene, while its function is anatagonized by FliW. In Thermosipho africanus (strain TCF52B), this protein is Translational regulator CsrA.